The following is a 601-amino-acid chain: ATP-dependent lipid A-core flippase (601 aa).

4 consecutive transmembrane segments (helical) span residues 27–47, 83–103, 174–194, and 267–287; these read IGLFLISIVGFLIFASTQPML, LLIVLIAAWQGLGSYLGNYFL, LLWMNWRLTLVMIAILPLIAV, and PLLQLVIYSAMAVLMFLVLYL. Residues 31-322 form the ABC transmembrane type-1 domain; that stretch reads LISIVGFLIF…LSEVSSTIQK (292 aa). An ABC transporter domain is found at 354 to 590; it reads LEVRNLSFTY…NGYYSRLHAM (237 aa). Residue 388-395 coordinates ATP; that stretch reads GRSGSGKS.

This sequence belongs to the ABC transporter superfamily. Lipid exporter (TC 3.A.1.106) family. As to quaternary structure, homodimer.

It localises to the cell inner membrane. It carries out the reaction ATP + H2O + lipid A-core oligosaccharideSide 1 = ADP + phosphate + lipid A-core oligosaccharideSide 2.. Functionally, involved in lipopolysaccharide (LPS) biosynthesis. Translocates lipid A-core from the inner to the outer leaflet of the inner membrane. Transmembrane domains (TMD) form a pore in the inner membrane and the ATP-binding domain (NBD) is responsible for energy generation. In Pseudomonas fluorescens (strain ATCC BAA-477 / NRRL B-23932 / Pf-5), this protein is ATP-dependent lipid A-core flippase.